The chain runs to 357 residues: MVAMSGGVDSSTAAALLKEAGYEVIGVTLALWPEDTPPPPGETGCCSLKAVDDARRVANILDIPYYVLNFRDLFEREVIDYFIASYLEGETPNPCIACNRRIKFGALLAKARALGIDYIATGHYARRWYDKEKGRYLLARGRDAGKDQSYALYTFTQEQLAHTLLPLGDYTKVEVREIAARYGLPVARKAESQEICFVTEGDYRDYIQSRAREKIKPGPILDTRGRVLGQHRGLPFYTIGQRKGLGLALGKPCFVVALDPERNAVIVGDKEDLERRVLYARDNNYILWGELPGKARVTARIRYRAPEAAATWHPLAGGRARLEFDEPQRAITPGQAVVYYQGDLVVGGGTIESVAQI.

ATP-binding positions include 3–10 (AMSGGVDS) and Leu-29. Cys-98 functions as the Nucleophile in the catalytic mechanism. Cys-98 and Cys-196 form a disulfide bridge. An ATP-binding site is contributed by Gly-122. An interaction with tRNA region spans residues 146-148 (KDQ). Catalysis depends on Cys-196, which acts as the Cysteine persulfide intermediate. Positions 302–303 (RY) are interaction with tRNA.

This sequence belongs to the MnmA/TRMU family.

It localises to the cytoplasm. The catalysed reaction is S-sulfanyl-L-cysteinyl-[protein] + uridine(34) in tRNA + AH2 + ATP = 2-thiouridine(34) in tRNA + L-cysteinyl-[protein] + A + AMP + diphosphate + H(+). Its function is as follows. Catalyzes the 2-thiolation of uridine at the wobble position (U34) of tRNA, leading to the formation of s(2)U34. This chain is tRNA-specific 2-thiouridylase MnmA, found in Moorella thermoacetica (strain ATCC 39073 / JCM 9320).